Here is a 139-residue protein sequence, read N- to C-terminus: Large ribosomal subunit protein bL20 (139 aa).

Belongs to the bacterial ribosomal protein bL20 family.

Functionally, binds directly to 23S ribosomal RNA and is necessary for the in vitro assembly process of the 50S ribosomal subunit. It is not involved in the protein synthesizing functions of that subunit. In Leuconostoc citreum (strain KM20), this protein is Large ribosomal subunit protein bL20.